The primary structure comprises 206 residues: Outer-membrane lipoprotein LolB (206 aa).

Positions 1-18 (MKTFKFLTALFATAILTA) are cleaved as a signal peptide. Cys19 carries the N-palmitoyl cysteine lipid modification. The S-diacylglycerol cysteine moiety is linked to residue Cys19.

It belongs to the LolB family. Monomer.

The protein localises to the cell outer membrane. Its function is as follows. Plays a critical role in the incorporation of lipoproteins in the outer membrane after they are released by the LolA protein. The protein is Outer-membrane lipoprotein LolB of Haemophilus influenzae (strain PittEE).